A 135-amino-acid chain; its full sequence is Interleukin-4 (135 aa).

Residues 1–24 form the signal peptide; it reads MGLTSQLIPVLVCLLACTSHFVHG. 3 cysteine pairs are disulfide-bonded: Cys27/Cys135, Cys48/Cys85, and Cys70/Cys105. Asn62 and Asn96 each carry an N-linked (GlcNAc...) asparagine glycan.

The protein belongs to the IL-4/IL-13 family.

The protein resides in the secreted. Participates in at least several B-cell activation processes as well as of other cell types. It is a costimulator of DNA-synthesis. It induces the expression of class II MHC molecules on resting B-cells. It enhances both secretion and cell surface expression of IgE and IgG1. It also regulates the expression of the low affinity Fc receptor for IgE (CD23) on both lymphocytes and monocytes. Positively regulates IL31RA expression in macrophages. Stimulates autophagy in dendritic cells by interfering with mTORC1 signaling and through the induction of RUFY4. This Cervus elaphus (Red deer) protein is Interleukin-4 (IL4).